The sequence spans 309 residues: uncharacterized protein (309 aa).

The HTH lysR-type domain maps to 1-60 (MKPLLDVLMILDALEKEGSFAAASAKLYKTPSALSYTVHKLESDLNIQLLDRSGHRAKFT). A DNA-binding region (H-T-H motif) is located at residues 20 to 39 (FAAASAKLYKTPSALSYTVH).

This sequence belongs to the LysR transcriptional regulatory family.

This is an uncharacterized protein from Escherichia coli (strain K12).